A 247-amino-acid chain; its full sequence is 3-deoxy-manno-octulosonate cytidylyltransferase (247 aa).

The protein belongs to the KdsB family.

The protein localises to the cytoplasm. It catalyses the reaction 3-deoxy-alpha-D-manno-oct-2-ulosonate + CTP = CMP-3-deoxy-beta-D-manno-octulosonate + diphosphate. It functions in the pathway nucleotide-sugar biosynthesis; CMP-3-deoxy-D-manno-octulosonate biosynthesis; CMP-3-deoxy-D-manno-octulosonate from 3-deoxy-D-manno-octulosonate and CTP: step 1/1. It participates in bacterial outer membrane biogenesis; lipopolysaccharide biosynthesis. Activates KDO (a required 8-carbon sugar) for incorporation into bacterial lipopolysaccharide in Gram-negative bacteria. In Methylobacterium radiotolerans (strain ATCC 27329 / DSM 1819 / JCM 2831 / NBRC 15690 / NCIMB 10815 / 0-1), this protein is 3-deoxy-manno-octulosonate cytidylyltransferase.